The chain runs to 375 residues: MYSRRYVACGLLCLLVIAIDQGHGQEHKPCTTPNGTAGRCVRVRECGYVLDLLRKDLFAHSDTVHLEGLQCGTRPDGGALVCCPAFVNEPNCGPSVFGVRIIGGNDTELGEFPWMALLRFQARNRKIHGNCGASLVSKRFVLSAAHCFTAAKSKGWKIHSVRVAEWNFMNHRGSKDCKQVKGYDVPICRKDYDVARFVQHPEYRVNAGVHVNDIVLIELAADVEYNVFVAPICLPVSNDTAQLPWGSSDDPEIEYTAAGWGSTESGKESTGMSYQLKQINLRAFNKERCKKLFQVPSGVGVGLGHICAGGIRDEDTCHGDSGGPLMEAVGGVWYLAGITSFGWPRCGRDGVPGVYTNISHYMGWLEREMFRGILA.

A signal peptide spans 1–24 (MYSRRYVACGLLCLLVIAIDQGHG). One can recognise a Clip domain in the interval 29 to 83 (PCTTPNGTAGRCVRVRECGYVLDLLRKDLFAHSDTVHLEGLQCGTRPDGGALVCC). 3 disulfides stabilise this stretch: Cys-30–Cys-82, Cys-40–Cys-71, and Cys-46–Cys-83. Residue Asn-34 is glycosylated (N-linked (GlcNAc...) asparagine). Positions 101–370 (IIGGNDTELG…YMGWLEREMF (270 aa)) constitute a Peptidase S1 domain. Asn-105 carries an N-linked (GlcNAc...) asparagine glycan. Cys-131 and Cys-147 are oxidised to a cystine. Catalysis depends on charge relay system residues His-146 and Asp-213. Residue Asn-238 is glycosylated (N-linked (GlcNAc...) asparagine). Cystine bridges form between Cys-289–Cys-307 and Cys-317–Cys-346. Ser-321 acts as the Charge relay system in catalysis. Asn-357 carries N-linked (GlcNAc...) asparagine glycosylation.

This sequence belongs to the peptidase S1 family. CLIP subfamily. N-glycosylated. Post-translationally, proteolytically cleaved. Expressed by a subpopulation of hemocytes.

It is found in the secreted. Functionally, serine protease. Plays a role in innate immunity against infections by parasite P.berghei and by Gram-negative bacteria such as E.coli. In response to P.berghei infection, contributes to the clearing of parasite ookinetes independent of melanization, an innate immune response which consists in the deposition of melanin pigments on invading pathogens and parasites. May play a role in non-septic wound healing. This Anopheles gambiae (African malaria mosquito) protein is CLIP domain-containing serine protease B14.